Consider the following 258-residue polypeptide: Capsid protein (258 aa).

The Bipartite nuclear localization signal motif lies at K3–R20. The Nuclear localization signal signature appears at R41–M55. A zinc finger spans residues C69–H86. The Nuclear export signal motif lies at L102–M123. Positions K202 to R249 match the Bipartite nuclear localization signal motif.

This sequence belongs to the geminiviridae capsid protein family. In terms of assembly, homomultimer. Binds to single-stranded and double-stranded viral DNA. Interacts (via nuclear localization signals) with host importin alpha-1a.

It is found in the virion. The protein localises to the host nucleus. Encapsidates the viral DNA into characteristic twinned ('geminate') particles. Binds the genomic viral ssDNA and shuttles it into and out of the cell nucleus. The CP of bipartite geminiviruses is not required for cell-to-cell or systemic movement. In Hewittia sublobata (Coralbush), this protein is Capsid protein.